Here is a 369-residue protein sequence, read N- to C-terminus: MASGAQLPPQPSSSEVSAVQSPGGRPGAGLEETALGVPLPPSPGEAPLPRSNRSRCPGTRQPGAASLHAASAAVPVRPRRGTAPAGKTADAVPAAAPEQAPRPAPQSRKPRNLEGDLDERRLLCHLQLAQDREARLWRGGKPQDEICDAFEEVVLWLLRLQNTFYFSQSTFNLALTIFGRLLISVKVKEKYLHCATITSLRLAAKVNEEEEFIPQVKDFTKHYGSDYSPNELLRMELAILDRLHWDLYIGTPLDFLTIFHALVVLSWPHVLELLPQRNPSLHVASLTRQLQHCMAGHQLLQFKGSTLALVIITLELERLMPGWCAPISDLLKKAQVGDMQYSCCKELVMQQLRSLQSSSCTDNFVSPAN.

The disordered stretch occupies residues 1-116 (MASGAQLPPQ…SRKPRNLEGD (116 aa)). 2 stretches are compositionally biased toward low complexity: residues 64-76 (AASL…AVPV) and 83-101 (APAG…EQAP).

Belongs to the cyclin family.

The chain is Cyclin-I2 (CCNI2) from Homo sapiens (Human).